Consider the following 150-residue polypeptide: Ribosome maturation factor RimP (150 aa).

Belongs to the RimP family.

It is found in the cytoplasm. Its function is as follows. Required for maturation of 30S ribosomal subunits. This is Ribosome maturation factor RimP from Francisella tularensis subsp. mediasiatica (strain FSC147).